An 822-amino-acid chain; its full sequence is MATVTNFKLVTPPESSRADKPGATKASDAFQEKKSVSVNYDRGEHEVSVNIGGLRKADIPRRYRIRVENDRFQKDWSVSEVVDRLMALNRWEEVDGVLNSWVGRFARKNFPVLIRELSRRGCIELCVNVFKWMKIQKNYCARNDIYNMMIRLHARHNWVDQARGLFFEMQKWSCKPDAETYDALINAHGRAGQWRWAMNLMDDMLRAAIAPSRSTYNNLINACGSSGNWREALEVCKKMTDNGVGPDLVTHNIVLSAYKSGRQYSKALSYFELMKGAKVRPDTTTFNIIIYCLSKLGQSSQALDLFNSMREKRAECRPDVVTFTSIMHLYSVKGEIENCRAVFEAMVAEGLKPNIVSYNALMGAYAVHGMSGTALSVLGDIKQNGIIPDVVSYTCLLNSYGRSRQPGKAKEVFLMMRKERRKPNVVTYNALIDAYGSNGFLAEAVEIFRQMEQDGIKPNVVSVCTLLAACSRSKKKVNVDTVLSAAQSRGINLNTAAYNSAIGSYINAAELEKAIALYQSMRKKKVKADSVTFTILISGSCRMSKYPEAISYLKEMEDLSIPLTKEVYSSVLCAYSKQGQVTEAESIFNQMKMAGCEPDVIAYTSMLHAYNASEKWGKACELFLEMEANGIEPDSIACSALMRAFNKGGQPSNVFVLMDLMREKEIPFTGAVFFEIFSACNTLQEWKRAIDLIQMMDPYLPSLSIGLTNQMLHLFGKSGKVEAMMKLFYKIIASGVGINLKTYAILLEHLLAVGNWRKYIEVLEWMSGAGIQPSNQMYRDIISFGERSAGIEFEPLIRQKLESLRNKGEGLIPTFRHEGTLL.

A disordered region spans residues 1–28 (MATVTNFKLVTPPESSRADKPGATKASD). 19 PPR repeats span residues 106 to 136 (ARKN…MKIQ), 142 to 176 (RNDI…SCKP), 177 to 211 (DAET…AIAP), 212 to 246 (SRST…GVGP), 247 to 281 (DLVT…KVRP), 282 to 316 (DTTT…RAEC), 319 to 353 (DVVT…GLKP), 354 to 388 (NIVS…GIIP), 389 to 423 (DVVS…RRKP), 424 to 458 (NVVT…GIKP), 459 to 493 (NVVS…GINL), 494 to 528 (NTAA…KVKA), 529 to 563 (DSVT…SIPL), 564 to 598 (TKEV…GCEP), 599 to 633 (DVIA…GIEP), 634 to 668 (DSIA…EIPF), 669 to 699 (TGAV…MDPY), 704 to 738 (SIGL…GVGI), and 739 to 773 (NLKT…GIQP).

Belongs to the PPR family. P subfamily.

The chain is Pentatricopeptide repeat-containing protein At2g41720 (EMB2654) from Arabidopsis thaliana (Mouse-ear cress).